Here is an 842-residue protein sequence, read N- to C-terminus: GPI ethanolamine phosphate transferase 2 (842 aa).

N186 carries an N-linked (GlcNAc...) asparagine glycan. Residues 409 to 429 (YNYPLLFIGCFLSIVITGTIY) traverse the membrane as a helical segment. N441 is a glycosylation site (N-linked (GlcNAc...) asparagine). 2 consecutive transmembrane segments (helical) span residues 442-462 (TSIL…SSFI) and 468-488 (FWWW…NFSS). N-linked (GlcNAc...) asparagine glycosylation is present at N506. The chain crosses the membrane as a helical span at residues 524-544 (GNIDALWWLNLITVTVVGLNL). The N-linked (GlcNAc...) asparagine glycan is linked to N551. A helical transmembrane segment spans residues 554–574 (VSLLGFSDLLSMGLLSMITFL). N578 carries an N-linked (GlcNAc...) asparagine glycan. The next 3 helical transmembrane spans lie at 615–635 (IHTA…AVLV), 698–718 (YLLA…QSGG), and 740–760 (IYVV…YWSF). An N-linked (GlcNAc...) asparagine glycan is attached at N771. 2 helical membrane-spanning segments follow: residues 783 to 803 (YPFI…CIIL) and 821 to 841 (MVWT…LLLL).

This sequence belongs to the PIGG/PIGN/PIGO family. PIGG subfamily.

The protein localises to the endoplasmic reticulum membrane. Its pathway is glycolipid biosynthesis; glycosylphosphatidylinositol-anchor biosynthesis. Ethanolamine phosphate transferase involved in glycosylphosphatidylinositol-anchor biosynthesis. Transfers ethanolamine phosphate to the GPI second mannose. This Candida glabrata (strain ATCC 2001 / BCRC 20586 / JCM 3761 / NBRC 0622 / NRRL Y-65 / CBS 138) (Yeast) protein is GPI ethanolamine phosphate transferase 2 (LAS21).